Here is a 156-residue protein sequence, read N- to C-terminus: Cyanate hydratase (156 aa).

Residues Arg-96, Glu-99, and Ser-122 contribute to the active site.

It belongs to the cyanase family.

It catalyses the reaction cyanate + hydrogencarbonate + 3 H(+) = NH4(+) + 2 CO2. In terms of biological role, catalyzes the reaction of cyanate with bicarbonate to produce ammonia and carbon dioxide. The chain is Cyanate hydratase from Burkholderia pseudomallei (strain 1106a).